We begin with the raw amino-acid sequence, 396 residues long: Multidrug resistance protein MdtL (396 aa).

The Cytoplasmic segment spans residues 1-4; the sequence is MFRY. Residues 5 to 25 form a helical membrane-spanning segment; it reads LLCCFGLVLMYPTGIDMYLVG. At 26-41 the chain is on the periplasmic side; sequence LPQIANQLGATEAQLH. The chain crosses the membrane as a helical span at residues 42 to 62; that stretch reads IAFSVYLAGMATTMLFAGSLA. The Cytoplasmic segment spans residues 63–64; it reads DR. The helical transmembrane segment at 65–85 threads the bilayer; that stretch reads IGRKPITLFSALLFALASYFA. The Periplasmic portion of the chain corresponds to 86–92; sequence ARSQSSD. A helical membrane pass occupies residues 93 to 113; sequence LFLVARFVQGVGAGCCYVVAF. Residues 114–131 lie on the Cytoplasmic side of the membrane; sequence AILRDALDDKRRAKVLSM. A helical transmembrane segment spans residues 132-152; the sequence is VNGVTCIIPVIAPVIGHLIML. Residues 153–157 lie on the Periplasmic side of the membrane; it reads RFPWP. Residues 158-178 traverse the membrane as a helical segment; it reads SLFYTMAVMGLLVFGLCLFVL. At 179–209 the chain is on the cytoplasmic side; it reads RETYSKASFHSQTLPRVQTESFKQGFFISRV. Residues 210 to 230 form a helical membrane-spanning segment; sequence VITTLGVTTILSYVNVSPMLI. Over 231-242 the chain is Periplasmic; that stretch reads MGQMGFDRGQYS. The helical transmembrane segment at 243–263 threads the bilayer; sequence NTMAMTALVSMLASFSTPFLL. Residues 264 to 277 are Cytoplasmic-facing; the sequence is NQFKEKSLILFSQT. Transmembrane regions (helical) follow at residues 278-298 and 299-319; these read LFAA…GQLF and NLLG…VTMS. Topologically, residues 320–333 are cytoplasmic; the sequence is QALSPFVARAGVAS. The helical transmembrane segment at 334 to 354 threads the bilayer; sequence SLLGIAQVCTSALYIWVMGLL. The Periplasmic portion of the chain corresponds to 355 to 360; the sequence is EVSAIN. Residues 361-381 form a helical membrane-spanning segment; that stretch reads ILLAILAVGALISITLMLAVP. At 382–396 the chain is on the cytoplasmic side; sequence KLSEMVANEQIPESA.

This sequence belongs to the major facilitator superfamily. DHA1 family. MdtL (TC 2.A.1.2.22) subfamily.

Its subcellular location is the cell inner membrane. This chain is Multidrug resistance protein MdtL, found in Shewanella sp. (strain ANA-3).